The following is a 77-amino-acid chain: MSVEAKVKKIIAEKLQGVDIEDVIPEASLVDDLGADSLALVELIMSMEEAFDIDIDDDDAEKMITVNDAIEYIRKKS.

The region spanning 1 to 77 (MSVEAKVKKI…DAIEYIRKKS (77 aa)) is the Carrier domain. The residue at position 37 (S37) is an O-(pantetheine 4'-phosphoryl)serine.

The protein belongs to the acyl carrier protein (ACP) family. In terms of processing, 4'-phosphopantetheine is transferred from CoA to a specific serine of apo-ACP by AcpS. This modification is essential for activity because fatty acids are bound in thioester linkage to the sulfhydryl of the prosthetic group.

The protein localises to the cytoplasm. It functions in the pathway lipid metabolism; fatty acid biosynthesis. In terms of biological role, carrier of the growing fatty acid chain in fatty acid biosynthesis. The protein is Acyl carrier protein of Desulforapulum autotrophicum (strain ATCC 43914 / DSM 3382 / VKM B-1955 / HRM2) (Desulfobacterium autotrophicum).